The sequence spans 198 residues: Suppressor of cytokine signaling 2 (198 aa).

Positions 1–29 are disordered; it reads MTLRCLEPSGNGADRTRSQWGTAGLPEEQ. The interval 1–75 is interaction with AREL1; the sequence is MTLRCLEPSG…PEGTFLIRDS (75 aa). S30 is subject to Phosphoserine. One can recognise an SH2 domain in the interval 48–156; sequence WYWGSMTVNE…TVHLYLTKPL (109 aa). S52 carries the post-translational modification Phosphoserine; by PKC. Residues 151–197 enclose the SOCS box domain; that stretch reads YLTKPLYTSAPTLQHFCRLAINKCTGTIWGLPLPTRLKDYLEEYKFQ. K173 participates in a covalent cross-link: Glycyl lysine isopeptide (Lys-Gly) (interchain with G-Cter in ubiquitin).

In terms of assembly, substrate-recognition component of the ECS(SOCS2) complex, composed of SOCS2, CUL5, ELOB, ELOC and RNF7/RBX2. Interacts with IGF1R. Interacts with DCUN1D1. Ubiquitinated; mediated by AREL1 and leading to its subsequent proteasomal degradation. Ubiquitination is dependent on phosphorylation at Ser-52, by PKC and is stimulated by LPS. In terms of processing, phosphorylation at Ser-52 by PKC facilitates its ubiquitination and proteasomal degradation. As to expression, expressed primarily in the testis, some expression in liver and lung.

Its subcellular location is the cytoplasm. Its pathway is protein modification; protein ubiquitination. Substrate-recognition component of a cullin-5-RING E3 ubiquitin-protein ligase complex (ECS complex, also named CRL5 complex), which mediates the ubiquitination and subsequent proteasomal degradation of target proteins, such as EPOR and GHR. Specifically recognizes and binds phosphorylated proteins via its SH2 domain, promoting their ubiquitination. The ECS(SOCS2) complex acts as a key regulator of growth hormone receptor (GHR) levels by mediating ubiquitination and degradation of GHR, following GHR phosphorylation by JAK2. The ECS(SOCS2) also catalyzes ubiquitination and degradation of JAK2-phosphorylated EPOR. The protein is Suppressor of cytokine signaling 2 of Mus musculus (Mouse).